The primary structure comprises 120 residues: Large ribosomal subunit protein bL20 (120 aa).

Belongs to the bacterial ribosomal protein bL20 family.

In terms of biological role, binds directly to 23S ribosomal RNA and is necessary for the in vitro assembly process of the 50S ribosomal subunit. It is not involved in the protein synthesizing functions of that subunit. The protein is Large ribosomal subunit protein bL20 of Xanthobacter autotrophicus (strain ATCC BAA-1158 / Py2).